A 137-amino-acid polypeptide reads, in one-letter code: MLSPKRTRFRKQHRGKMKGISYRGNHICFGKYALQALEPAWITSRQIEAGRRAMTRKARRGGKFWVRIFPDKPVTVRPAETRMGSGKGCPEYWVAVVKPGRILYEMGGVTKNIARRAFSIAASKMPIRTQFIILEIE.

It belongs to the universal ribosomal protein uL16 family. Part of the 50S ribosomal subunit.

It localises to the plastid. This chain is Large ribosomal subunit protein uL16c, found in Cuscuta reflexa (Southern Asian dodder).